We begin with the raw amino-acid sequence, 245 residues long: MKIDYLTLFPEMFDGVLNHSIMKRAQENNKLQINTVNFRDYAINKHNQVDDYPYGGGQGMVLKPEPVFNAMEDLDVTEQARVILMCPQGEPFSHQKAVELSKADHIVFICGHYEGYDERIRTHLVTDEISMGDYVLTGGELPAMTMTDAIVRLIPGVLGNEQSHQDDSFSDGLLEFPQYTRPREFKGLTVPDVLLSGNHANIDAWRHEQKLIRTYNKRPDLIEKYPLTNADKQILERYKIGLKKG.

Residues G111 and 131-136 each bind S-adenosyl-L-methionine; that span reads MGDYVL.

This sequence belongs to the RNA methyltransferase TrmD family. In terms of assembly, homodimer.

The protein resides in the cytoplasm. The catalysed reaction is guanosine(37) in tRNA + S-adenosyl-L-methionine = N(1)-methylguanosine(37) in tRNA + S-adenosyl-L-homocysteine + H(+). Its function is as follows. Specifically methylates guanosine-37 in various tRNAs. This chain is tRNA (guanine-N(1)-)-methyltransferase, found in Staphylococcus aureus (strain MRSA252).